The sequence spans 388 residues: Succinate--CoA ligase [ADP-forming] subunit beta (388 aa).

The region spanning 9–244 is the ATP-grasp domain; that stretch reads KQLFARYGLP…QSQEDPREAQ (236 aa). Residues K46, 53-55, E99, T102, and E107 contribute to the ATP site; that span reads GRG. Positions 199 and 213 each coordinate Mg(2+). Substrate contacts are provided by residues N264 and 321–323; that span reads GIV.

This sequence belongs to the succinate/malate CoA ligase beta subunit family. Heterotetramer of two alpha and two beta subunits. Requires Mg(2+) as cofactor.

The enzyme catalyses succinate + ATP + CoA = succinyl-CoA + ADP + phosphate. The catalysed reaction is GTP + succinate + CoA = succinyl-CoA + GDP + phosphate. It functions in the pathway carbohydrate metabolism; tricarboxylic acid cycle; succinate from succinyl-CoA (ligase route): step 1/1. Succinyl-CoA synthetase functions in the citric acid cycle (TCA), coupling the hydrolysis of succinyl-CoA to the synthesis of either ATP or GTP and thus represents the only step of substrate-level phosphorylation in the TCA. The beta subunit provides nucleotide specificity of the enzyme and binds the substrate succinate, while the binding sites for coenzyme A and phosphate are found in the alpha subunit. In Salmonella dublin (strain CT_02021853), this protein is Succinate--CoA ligase [ADP-forming] subunit beta.